Here is a 967-residue protein sequence, read N- to C-terminus: Siderophore exporter MmpL4 (967 aa).

Transmembrane regions (helical) follow at residues 26–46 (AFAV…TVFV), 210–230 (VIFI…LLLI), 242–262 (VVAV…VSLL), 303–323 (AHVI…LSFA), 333–353 (IPCA…GPAV), 384–404 (WPLP…LALP), 769–789 (WDLL…MLII), 793–813 (FIAA…SFGL), 821–841 (ILAI…LLAV), 875–895 (VVTN…VSDL), and 913–934 (TLIV…WFWW). The interval 943–967 (ARTPTVPSETQPAGRPLAMSSDRLG) is disordered.

Belongs to the resistance-nodulation-cell division (RND) (TC 2.A.6) family. MmpL subfamily. In terms of assembly, interacts with MmpS4.

It localises to the cell inner membrane. Its function is as follows. Part of an export system, which is required for biosynthesis and secretion of siderophores. This chain is Siderophore exporter MmpL4 (mmpL4), found in Mycobacterium tuberculosis (strain CDC 1551 / Oshkosh).